The sequence spans 156 residues: Ribosomal RNA large subunit methyltransferase H (156 aa).

Residues leucine 74, glycine 105, and 124–129 contribute to the S-adenosyl-L-methionine site; that span reads LSKLTL.

This sequence belongs to the RNA methyltransferase RlmH family. As to quaternary structure, homodimer.

It is found in the cytoplasm. The enzyme catalyses pseudouridine(1915) in 23S rRNA + S-adenosyl-L-methionine = N(3)-methylpseudouridine(1915) in 23S rRNA + S-adenosyl-L-homocysteine + H(+). Its function is as follows. Specifically methylates the pseudouridine at position 1915 (m3Psi1915) in 23S rRNA. The protein is Ribosomal RNA large subunit methyltransferase H of Legionella pneumophila (strain Paris).